Here is an 829-residue protein sequence, read N- to C-terminus: Translation initiation factor IF-2 (829 aa).

A compositionally biased stretch (basic and acidic residues) spans 128–137; it reads QNAEEEKVEA. The interval 128–157 is disordered; sequence QNAEEEKVEASAKTVQNNEDIQPQTSKKKE. Residues 140–152 show a composition bias toward polar residues; it reads KTVQNNEDIQPQT. The 171-residue stretch at 327 to 497 folds into the tr-type G domain; the sequence is TRAPVVTVMG…LLIAEMQDLK (171 aa). Positions 336 to 343 are G1; that stretch reads GHVDHGKT. 336–343 lines the GTP pocket; sequence GHVDHGKT. Residues 361–365 form a G2 region; sequence GITQH. Residues 383-386 are G3; it reads DTPG. GTP is bound by residues 383 to 387 and 437 to 440; these read DTPGH and NKID. Residues 437–440 form a G4 region; it reads NKID. Positions 473–475 are G5; the sequence is SAL.

This sequence belongs to the TRAFAC class translation factor GTPase superfamily. Classic translation factor GTPase family. IF-2 subfamily.

Its subcellular location is the cytoplasm. Its function is as follows. One of the essential components for the initiation of protein synthesis. Protects formylmethionyl-tRNA from spontaneous hydrolysis and promotes its binding to the 30S ribosomal subunits. Also involved in the hydrolysis of GTP during the formation of the 70S ribosomal complex. In Rickettsia felis (strain ATCC VR-1525 / URRWXCal2) (Rickettsia azadi), this protein is Translation initiation factor IF-2.